A 374-amino-acid chain; its full sequence is UPF0754 membrane protein SAS1767 (374 aa).

2 helical membrane passes run leucine 4 to isoleucine 24 and serine 354 to valine 374.

Belongs to the UPF0754 family.

The protein resides in the cell membrane. The chain is UPF0754 membrane protein SAS1767 from Staphylococcus aureus (strain MSSA476).